The sequence spans 44 residues: Cytochrome b559 subunit beta (44 aa).

A helical membrane pass occupies residues 19 to 35; the sequence is WLAVHTLAVPTVFFVGA. His23 is a heme binding site.

Belongs to the PsbE/PsbF family. Heterodimer of an alpha subunit and a beta subunit. PSII is composed of 1 copy each of membrane proteins PsbA, PsbB, PsbC, PsbD, PsbE, PsbF, PsbH, PsbI, PsbJ, PsbK, PsbL, PsbM, PsbT, PsbX, PsbY, PsbZ, Psb30/Ycf12, peripheral proteins PsbO, CyanoQ (PsbQ), PsbU, PsbV and a large number of cofactors. It forms dimeric complexes. Heme b is required as a cofactor.

It is found in the cellular thylakoid membrane. Its function is as follows. This b-type cytochrome is tightly associated with the reaction center of photosystem II (PSII). PSII is a light-driven water:plastoquinone oxidoreductase that uses light energy to abstract electrons from H(2)O, generating O(2) and a proton gradient subsequently used for ATP formation. It consists of a core antenna complex that captures photons, and an electron transfer chain that converts photonic excitation into a charge separation. The sequence is that of Cytochrome b559 subunit beta from Crocosphaera subtropica (strain ATCC 51142 / BH68) (Cyanothece sp. (strain ATCC 51142)).